The chain runs to 72 residues: Translation initiation factor IF-1 (72 aa).

Residues 1-72 form the S1-like domain; sequence MAKEGNIEME…SKGRIVYRAR (72 aa).

The protein belongs to the IF-1 family. Component of the 30S ribosomal translation pre-initiation complex which assembles on the 30S ribosome in the order IF-2 and IF-3, IF-1 and N-formylmethionyl-tRNA(fMet); mRNA recruitment can occur at any time during PIC assembly.

It is found in the cytoplasm. In terms of biological role, one of the essential components for the initiation of protein synthesis. Stabilizes the binding of IF-2 and IF-3 on the 30S subunit to which N-formylmethionyl-tRNA(fMet) subsequently binds. Helps modulate mRNA selection, yielding the 30S pre-initiation complex (PIC). Upon addition of the 50S ribosomal subunit IF-1, IF-2 and IF-3 are released leaving the mature 70S translation initiation complex. This chain is Translation initiation factor IF-1, found in Hahella chejuensis (strain KCTC 2396).